A 174-amino-acid polypeptide reads, in one-letter code: Micrococcal nuclease (174 aa).

Positions 1-23 are cleaved as a signal peptide; that stretch reads MKSALAALRAVAAAVVLIVSVPA. Catalysis depends on residues arginine 52, glutamate 60, and arginine 94.

Belongs to the thermonuclease family.

It carries out the reaction Endonucleolytic cleavage to nucleoside 3'-phosphates and 3'-phosphooligonucleotide end-products.. In Shigella flexneri, this protein is Micrococcal nuclease (nuc).